A 615-amino-acid chain; its full sequence is Translation initiation factor IF-2 (615 aa).

One can recognise a tr-type G domain in the interval 118 to 285 (KRPPIVTVMG…AILTLAEINE (168 aa)). The tract at residues 127–134 (GHVDHGKT) is G1. 127-134 (GHVDHGKT) serves as a coordination point for GTP. Positions 152 to 156 (GITQH) are G2. Residues 173–176 (DTPG) form a G3 region. GTP-binding positions include 173–177 (DTPGH) and 227–230 (NKMD). The tract at residues 227–230 (NKMD) is G4. Residues 263–265 (SAI) form a G5 region.

Belongs to the TRAFAC class translation factor GTPase superfamily. Classic translation factor GTPase family. IF-2 subfamily.

The protein localises to the cytoplasm. In terms of biological role, one of the essential components for the initiation of protein synthesis. Protects formylmethionyl-tRNA from spontaneous hydrolysis and promotes its binding to the 30S ribosomal subunits. Also involved in the hydrolysis of GTP during the formation of the 70S ribosomal complex. This is Translation initiation factor IF-2 from Mycoplasmoides gallisepticum (strain R(low / passage 15 / clone 2)) (Mycoplasma gallisepticum).